Here is a 43-residue protein sequence, read N- to C-terminus: Photosystem I reaction center subunit IX (43 aa).

A helical transmembrane segment spans residues 7–27 (YLSVAPVLSALWFGALAGLLI).

It belongs to the PsaJ family.

The protein resides in the plastid. It is found in the chloroplast thylakoid membrane. Its function is as follows. May help in the organization of the PsaE and PsaF subunits. This chain is Photosystem I reaction center subunit IX, found in Oenothera argillicola (Appalachian evening primrose).